Consider the following 358-residue polypeptide: Feruloyl CoA ortho-hydroxylase F6H1-3 (358 aa).

In terms of domain architecture, Fe2OG dioxygenase spans 200 to 308; it reads TKESLLMGSK…RISVPIFVNP (109 aa). Tyr-216 is a 2-oxoglutarate binding site. Positions 231, 233, and 289 each coordinate Fe cation. 2-oxoglutarate is bound by residues Arg-299 and Ser-301.

The protein belongs to the iron/ascorbate-dependent oxidoreductase family. The cofactor is L-ascorbate. It depends on Fe(2+) as a cofactor. Mostly expressed in tubers, and, at low levels, in underground stems, stems, leaves and petioles.

The enzyme catalyses (E)-feruloyl-CoA + 2-oxoglutarate + O2 = (E)-6-hydroxyferuloyl-CoA + succinate + CO2. Its pathway is phenylpropanoid metabolism. In terms of biological role, 2-oxoglutarate (OG)- and Fe(II)-dependent dioxygenase (2OGD) involved in scopoletin biosynthesis. Converts feruloyl CoA into 6'-hydroxyferuloyl CoA, and, at low efficiency, caffeoyl-CoA into 6'-hydroxycaffeate, but has no activity with p-coumaroyl-CoA. The polypeptide is Feruloyl CoA ortho-hydroxylase F6H1-3 (Ipomoea batatas (Sweet potato)).